The sequence spans 410 residues: Ribosomal protein S6 kinase-related protein (410 aa).

Positions 107-274 constitute a Protein kinase domain; the sequence is LKILGLVAKG…GTLQYMAPEV (168 aa). ATP contacts are provided by residues 113 to 121 and Lys136; that span reads VAKGSFGTV. Residue Asp229 is the Proton acceptor of the active site.

The protein belongs to the protein kinase superfamily. Ser/Thr protein kinase family.

The catalysed reaction is L-seryl-[protein] + ATP = O-phospho-L-seryl-[protein] + ADP + H(+). The enzyme catalyses L-threonyl-[protein] + ATP = O-phospho-L-threonyl-[protein] + ADP + H(+). This Homo sapiens (Human) protein is Ribosomal protein S6 kinase-related protein.